We begin with the raw amino-acid sequence, 143 residues long: Meiotically up-regulated gene 128 protein (143 aa).

Its function is as follows. Has a role in meiosis. The protein is Meiotically up-regulated gene 128 protein (mug128) of Schizosaccharomyces pombe (strain 972 / ATCC 24843) (Fission yeast).